A 380-amino-acid polypeptide reads, in one-letter code: Chaperone protein DnaJ (380 aa).

In terms of domain architecture, J spans 5–69 (DLYKVLGVEK…QKRAQYDQFG (65 aa)). The CR-type zinc-finger motif lies at 140–222 (GKKTTITYNR…CGGSGHTEQS (83 aa)). Positions 153, 156, 170, 173, 196, 199, 210, and 213 each coordinate Zn(2+). 4 CXXCXGXG motif repeats span residues 153 to 160 (CETCGGSG), 170 to 177 (CSKCHGAG), 196 to 203 (CDVCHGTG), and 210 to 217 (CATCGGSG).

The protein belongs to the DnaJ family. Homodimer. The cofactor is Zn(2+).

Its subcellular location is the cytoplasm. Its function is as follows. Participates actively in the response to hyperosmotic and heat shock by preventing the aggregation of stress-denatured proteins and by disaggregating proteins, also in an autonomous, DnaK-independent fashion. Unfolded proteins bind initially to DnaJ; upon interaction with the DnaJ-bound protein, DnaK hydrolyzes its bound ATP, resulting in the formation of a stable complex. GrpE releases ADP from DnaK; ATP binding to DnaK triggers the release of the substrate protein, thus completing the reaction cycle. Several rounds of ATP-dependent interactions between DnaJ, DnaK and GrpE are required for fully efficient folding. Also involved, together with DnaK and GrpE, in the DNA replication of plasmids through activation of initiation proteins. The sequence is that of Chaperone protein DnaJ from Lactiplantibacillus plantarum (strain ATCC BAA-793 / NCIMB 8826 / WCFS1) (Lactobacillus plantarum).